Here is a 225-residue protein sequence, read N- to C-terminus: Tryptophan synthase beta chain (225 aa).

It belongs to the TrpB family. Tetramer of two alpha and two beta chains. The cofactor is pyridoxal 5'-phosphate.

The enzyme catalyses (1S,2R)-1-C-(indol-3-yl)glycerol 3-phosphate + L-serine = D-glyceraldehyde 3-phosphate + L-tryptophan + H2O. Its pathway is amino-acid biosynthesis; L-tryptophan biosynthesis; L-tryptophan from chorismate: step 5/5. In terms of biological role, the beta subunit is responsible for the synthesis of L-tryptophan from indole and L-serine. This is Tryptophan synthase beta chain (trpB) from Buchnera aphidicola subsp. Rhopalosiphum maidis.